The chain runs to 700 residues: Phenoloxidase 8 (700 aa).

Residues 1 to 51 (MATLTQKFHGLLQHPLEPLFLPKNDGTLFYDLPERFLTSRYSPIGQNLANR) constitute a propeptide that is removed on maturation. 2 N-linked (GlcNAc...) asparagine glycosylation sites follow: asparagine 64 and asparagine 198. Cu cation-binding residues include histidine 223, histidine 227, and histidine 252. Residue asparagine 295 is glycosylated (N-linked (GlcNAc...) asparagine). The active-site Proton acceptor is glutamate 364. Positions 379, 383, and 419 each coordinate Cu cation. Residues asparagine 445, asparagine 507, and asparagine 565 are each glycosylated (N-linked (GlcNAc...) asparagine). 2 disulfides stabilise this stretch: cysteine 592/cysteine 636 and cysteine 594/cysteine 643.

Belongs to the tyrosinase family. In terms of assembly, homodimer. Cu(2+) serves as cofactor. Post-translationally, upon activation, a trypsin type protease cleaves prophenol oxidase to yield the active enzyme.

The protein resides in the secreted. The catalysed reaction is 2 tyramine + O2 = 2 dopamine. It catalyses the reaction 2 dopamine + O2 = 2 dopamine quinone + 2 H2O. Functionally, this is a copper-containing oxidase that functions in the formation of pigments such as melanins and other polyphenolic compounds. Catalyzes the oxidation of o-diphenols such as dopamine. Also oxidizes monophenols such as tyramine. This Anopheles gambiae (African malaria mosquito) protein is Phenoloxidase 8.